The chain runs to 475 residues: Bifunctional protein HldE (475 aa).

A ribokinase region spans residues 1–318 (MMQYSPKFNN…ENAIHHREET (318 aa)). Position 195–198 (195–198 (NMSE)) interacts with ATP. The active site involves aspartate 264. The interval 344-475 (MTNGCFDILH…NVIKKIQASK (132 aa)) is cytidylyltransferase.

In the N-terminal section; belongs to the carbohydrate kinase PfkB family. This sequence in the C-terminal section; belongs to the cytidylyltransferase family. In terms of assembly, homodimer.

It carries out the reaction D-glycero-beta-D-manno-heptose 7-phosphate + ATP = D-glycero-beta-D-manno-heptose 1,7-bisphosphate + ADP + H(+). It catalyses the reaction D-glycero-beta-D-manno-heptose 1-phosphate + ATP + H(+) = ADP-D-glycero-beta-D-manno-heptose + diphosphate. It participates in nucleotide-sugar biosynthesis; ADP-L-glycero-beta-D-manno-heptose biosynthesis; ADP-L-glycero-beta-D-manno-heptose from D-glycero-beta-D-manno-heptose 7-phosphate: step 1/4. Its pathway is nucleotide-sugar biosynthesis; ADP-L-glycero-beta-D-manno-heptose biosynthesis; ADP-L-glycero-beta-D-manno-heptose from D-glycero-beta-D-manno-heptose 7-phosphate: step 3/4. Catalyzes the phosphorylation of D-glycero-D-manno-heptose 7-phosphate at the C-1 position to selectively form D-glycero-beta-D-manno-heptose-1,7-bisphosphate. In terms of biological role, catalyzes the ADP transfer from ATP to D-glycero-beta-D-manno-heptose 1-phosphate, yielding ADP-D-glycero-beta-D-manno-heptose. In Actinobacillus pleuropneumoniae serotype 5b (strain L20), this protein is Bifunctional protein HldE.